A 191-amino-acid polypeptide reads, in one-letter code: ECF RNA polymerase sigma-E factor (191 aa).

The segment at 1-153 is binds RNAP core; that stretch reads MSEQLTDQVL…MAITLRELDG (153 aa). The tract at residues 25 to 92 is sigma-70 factor domain-2; that stretch reads LVVRYQHKVA…KNYLVAQGRR (68 aa). Positions 48 to 61 match the Polymerase core binding motif; it reads DVVQEAFIKAYRAL. The sigma-70 factor domain-4 stretch occupies residues 129–180; the sequence is QIVFRTIESLPEDLRMAITLRELDGLSYEEIAAIMDCPVGTVRSRIFRAREA. Residues 156-175 constitute a DNA-binding region (H-T-H motif); it reads YEEIAAIMDCPVGTVRSRIF.

Belongs to the sigma-70 factor family. ECF subfamily. In terms of assembly, interacts transiently with the RNAP catalytic core formed by RpoA, RpoB, RpoC and RpoZ (2 alpha, 1 beta, 1 beta' and 1 omega subunit) to form the RNAP holoenzyme that can initiate transcription. Interacts 1:1 with anti-sigma-E factor RseA which prevents binding to RNAP catalytic core.

It localises to the cytoplasm. Its activity is regulated as follows. ECF sigma-E is held in an inactive form by its cognate anti-sigma factor (RseA) until released by regulated intramembrane proteolysis (RIP). RIP occurs when an extracytoplasmic signal (periplasmic stress and excess LPS) triggers a concerted proteolytic cascade to transmit information and elicit cellular responses. The anti-sigma factor RseA is an inner membrane protein, binding sigma-E in the cytoplasm and RseB in the periplasm. RseA is first cut extracytoplasmically (site-1 protease, S1P, by DegS), then within the membrane itself (site-2 protease, S2P, by RseP), while cytoplasmic proteases (predominantly ClpX-ClpP) finish degrading the regulatory protein, liberating sigma-E. Degradation of RseA requires 2 signals to activate DegS; an outer membrane protein (OMP) signal activates DegS, while an LPS signal causes release of RseB from RseA, freeing RseA to be cleaved. Its function is as follows. Sigma factors are initiation factors that promote the attachment of RNA polymerase (RNAP) to specific initiation sites and are then released. Extracytoplasmic function (ECF) sigma-E controls the envelope stress response, responding to periplasmic protein stress, increased levels of periplasmic lipopolysaccharide (LPS) as well as heat shock and oxidative stress; it controls protein processing in the extracytoplasmic compartment. This is ECF RNA polymerase sigma-E factor (rpoE) from Escherichia coli O157:H7.